We begin with the raw amino-acid sequence, 214 residues long: Adenylate kinase (214 aa).

Position 10-15 (10-15) interacts with ATP; that stretch reads GAGKGT. The segment at 30–59 is NMP; sequence STGDMLRAAIKAGSELGNKAKAVMDAGQLV. Residues Thr31, Arg36, 57 to 59, 85 to 88, and Gln92 contribute to the AMP site; these read QLV and GFPR. Residues 122-159 are LID; the sequence is GRRVHSGSGRVYHLVYNPPKVEGKDDVSGDDLSIRPDD. ATP contacts are provided by residues Arg123 and 132-133; that span reads VY. 2 residues coordinate AMP: Arg156 and Arg167. Gln200 is an ATP binding site.

It belongs to the adenylate kinase family. Monomer.

It localises to the cytoplasm. It carries out the reaction AMP + ATP = 2 ADP. It participates in purine metabolism; AMP biosynthesis via salvage pathway; AMP from ADP: step 1/1. Functionally, catalyzes the reversible transfer of the terminal phosphate group between ATP and AMP. Plays an important role in cellular energy homeostasis and in adenine nucleotide metabolism. The polypeptide is Adenylate kinase (Colwellia psychrerythraea (strain 34H / ATCC BAA-681) (Vibrio psychroerythus)).